Reading from the N-terminus, the 253-residue chain is 5'-nucleotidase SurE (253 aa).

Positions 8, 9, 39, and 95 each coordinate a divalent metal cation.

The protein belongs to the SurE nucleotidase family. Requires a divalent metal cation as cofactor.

Its subcellular location is the cytoplasm. The catalysed reaction is a ribonucleoside 5'-phosphate + H2O = a ribonucleoside + phosphate. Functionally, nucleotidase that shows phosphatase activity on nucleoside 5'-monophosphates. In Kosmotoga olearia (strain ATCC BAA-1733 / DSM 21960 / TBF 19.5.1), this protein is 5'-nucleotidase SurE.